The chain runs to 270 residues: MKMTSKKMKDELMKKLSRPEWDFHYDSEKEVLRIEQKDSKKGINVSLPGVVAKWEVNKEKAIEEVAYYVQEALIAMHKEENSAAKILPVIRSTSFPKQAEEGNPFIMTDHTAETRIYYALDSNKTYRLIDERLLQKLGLTEQQVREMALFNARSLSYEFKQDTVAGNTFYFLNTNDGYDATRILNESLLQSMREKISGDMVVAVPHQDVLIIADIVNEIGYDIIAQMTMKFFAEGHVPITSLSFVYEDGDFEPIFILAKNRKKTDGKEKG.

The protein belongs to the UPF0354 family.

The sequence is that of UPF0354 protein BT9727_4425 from Bacillus thuringiensis subsp. konkukian (strain 97-27).